Reading from the N-terminus, the 315-residue chain is BTB/POZ domain-containing adapter for CUL3-mediated RhoA degradation protein 3 (315 aa).

M1 bears the N-acetylmethionine mark. S23 is modified (phosphoserine). The BTB domain occupies 32–100 (KYVKLNVGGA…LRDGGVPLPE (69 aa)). A PCNA-binding motif is present at residues 239-245 (QTKVEFP). The disordered stretch occupies residues 269–294 (NALLEATGGAAGRSHHLDEDEERERE).

This sequence belongs to the BACURD family. As to quaternary structure, homotetramer; forms a two-fold symmetric tetramer in solution. Interacts with CUL3; interaction is direct and forms a 5:5 heterodecamer. Component of the BCR(BACURD3) E3 ubiquitin ligase complex, at least composed of CUL3, KCTD10/BACURD3 and RBX1. Interacts with DNA polymerase delta subunit 2/POLD2. Interacts with PCNA. Associated with the tectonic-like complex (also named B9 complex); however as Kctd10 has not been identified in all tectonic-like complexes purifications it is unclear whether it is really part of the complex.

It localises to the nucleus. Its pathway is protein modification; protein ubiquitination. Functionally, substrate-specific adapter of a BCR (BTB-CUL3-RBX1) E3 ubiquitin-protein ligase complex. The BCR(BACURD3) E3 ubiquitin ligase complex mediates the ubiquitination of target proteins, leading to their degradation by the proteasome. In Mus musculus (Mouse), this protein is BTB/POZ domain-containing adapter for CUL3-mediated RhoA degradation protein 3 (Kctd10).